The sequence spans 313 residues: Desiccation-related protein PCC13-62 (313 aa).

Positions 1 to 26 (MAQQPTFASAALVSFFLALICSCSYA) are cleaved as a signal peptide.

The sequence is that of Desiccation-related protein PCC13-62 from Craterostigma plantagineum (Blue gem).